The chain runs to 314 residues: Mitochondrial 2-oxoglutarate/malate carrier protein (314 aa).

Alanine 2 carries the N-acetylalanine modification. Phosphoserine is present on serine 6. Solcar repeat units lie at residues 23–108, 117–208, and 217–306; these read VKFL…LFER, PGFL…SKQF, and DNIL…MNKA. A helical transmembrane segment spans residues 24-42; that stretch reads KFLFGGLAGMGATVFVQPL. Lysine 57 is subject to N6-succinyllysine. Position 73 is an N6-acetyllysine (lysine 73). Residues 83 to 101 form a helical membrane-spanning segment; it reads GLSAGLLRQATYTTTRLGI. Phosphotyrosine is present on tyrosine 102. The next 3 membrane-spanning stretches (helical) occupy residues 119–140, 183–202, and 222–240; these read FLLK…GTPA, GCIP…LASY, and HFCA…SMPV. Position 256 is an N6-acetyllysine (lysine 256). The helical transmembrane segment at 281 to 300 threads the bilayer; sequence GFTPYYARLGPHTVLTFIFL.

This sequence belongs to the mitochondrial carrier (TC 2.A.29) family. In terms of assembly, interacts with SMIM26. As to expression, most highly expressed in the heart.

It localises to the mitochondrion inner membrane. It catalyses the reaction (S)-malate(in) + 2-oxoglutarate(out) = (S)-malate(out) + 2-oxoglutarate(in). It carries out the reaction malonate(in) + 2-oxoglutarate(out) = malonate(out) + 2-oxoglutarate(in). The catalysed reaction is succinate(in) + 2-oxoglutarate(out) = succinate(out) + 2-oxoglutarate(in). The enzyme catalyses maleate(in) + 2-oxoglutarate(out) = maleate(out) + 2-oxoglutarate(in). It catalyses the reaction oxaloacetate(in) + 2-oxoglutarate(out) = oxaloacetate(out) + 2-oxoglutarate(in). Catalyzes the transport of 2-oxoglutarate (alpha-oxoglutarate) across the inner mitochondrial membrane in an electroneutral exchange for malate. Can also exchange 2-oxoglutarate for other dicarboxylic acids such as malonate, succinate, maleate and oxaloacetate, although with lower affinity. Contributes to several metabolic processes, including the malate-aspartate shuttle, the oxoglutarate/isocitrate shuttle, in gluconeogenesis from lactate, and in nitrogen metabolism. Maintains mitochondrial fusion and fission events, and the organization and morphology of cristae. Involved in the regulation of apoptosis. Helps protect from cytotoxic-induced apoptosis by modulating glutathione levels in mitochondria. This is Mitochondrial 2-oxoglutarate/malate carrier protein (SLC25A11) from Homo sapiens (Human).